The sequence spans 262 residues: tRNA pseudouridine synthase A (262 aa).

Aspartate 51 functions as the Nucleophile in the catalytic mechanism. Position 109 (tyrosine 109) interacts with substrate.

Belongs to the tRNA pseudouridine synthase TruA family. Homodimer.

It catalyses the reaction uridine(38/39/40) in tRNA = pseudouridine(38/39/40) in tRNA. Functionally, formation of pseudouridine at positions 38, 39 and 40 in the anticodon stem and loop of transfer RNAs. The protein is tRNA pseudouridine synthase A of Dechloromonas aromatica (strain RCB).